Reading from the N-terminus, the 476-residue chain is Aspartyl/glutamyl-tRNA(Asn/Gln) amidotransferase subunit B (476 aa).

It belongs to the GatB/GatE family. GatB subfamily. Heterotrimer of A, B and C subunits.

It carries out the reaction L-glutamyl-tRNA(Gln) + L-glutamine + ATP + H2O = L-glutaminyl-tRNA(Gln) + L-glutamate + ADP + phosphate + H(+). It catalyses the reaction L-aspartyl-tRNA(Asn) + L-glutamine + ATP + H2O = L-asparaginyl-tRNA(Asn) + L-glutamate + ADP + phosphate + 2 H(+). Its function is as follows. Allows the formation of correctly charged Asn-tRNA(Asn) or Gln-tRNA(Gln) through the transamidation of misacylated Asp-tRNA(Asn) or Glu-tRNA(Gln) in organisms which lack either or both of asparaginyl-tRNA or glutaminyl-tRNA synthetases. The reaction takes place in the presence of glutamine and ATP through an activated phospho-Asp-tRNA(Asn) or phospho-Glu-tRNA(Gln). The chain is Aspartyl/glutamyl-tRNA(Asn/Gln) amidotransferase subunit B from Listeria monocytogenes serotype 4b (strain CLIP80459).